Reading from the N-terminus, the 121-residue chain is Neuromedin-B (121 aa).

The N-terminal stretch at 1-24 (MTLRARGARLLGGLLFFTLLAAGA) is a signal peptide. Methionine 56 carries the methionine amide modification. The propeptide occupies 60-121 (SLEPPNPSLL…RRLLVQTLEK (62 aa)).

The protein belongs to the bombesin/neuromedin-B/ranatensin family. Higher expression in the central nervous system (CNS) than in peripheral tissues. Highest levels are found in the olfactory bulb. Relatively high levels in the CNS (including the cerebral cortex, cerebellum, spinal cord, medulla oblongata, midbrain, hypothalamus, hippocampus, and hypophysis) and in peripheral tissues such as the pancreas, adrenal gland, testis, ovary and cecum. Moderate levels are found in the rectum, heart and pons with low expression levels detected in the bone marrow and duodenum. Other tissues show no or low levels of expression.

It localises to the secreted. It is found in the cell projection. The protein resides in the neuron projection. Stimulates smooth muscle contraction. Induces sighing by acting directly on the pre-Botzinger complex, a cluster of several thousand neurons in the ventrolateral medulla responsible for inspiration during respiratory activity. Contributes to the induction of sneezing following exposure to chemical irritants or allergens which causes release of NMB by nasal sensory neurons and activation of NMBR-expressing neurons in the sneeze-evoking region of the brainstem. These in turn activate neurons of the caudal ventral respiratory group, giving rise to the sneezing response. Contributes to induction of acute itch, possibly through activation of the NMBR receptor on dorsal root ganglion neurons. Increases expression of NMBR and steroidogenic mediators STAR, CYP11A1 and HSD3B1 in Leydig cells, induces secretion of testosterone by Leydig cells and also promotes Leydig cell proliferation. Plays a role in the innate immune response to influenza A virus infection by enhancing interferon alpha expression and reducing expression of IL6. Plays a role in CSF1-induced proliferation of osteoclast precursors by contributing to positive regulation of the expression of the CSF1 receptor CSF1R. The chain is Neuromedin-B (NMB) from Sus scrofa (Pig).